The chain runs to 509 residues: tRNA-2-methylthio-N(6)-dimethylallyladenosine synthase (509 aa).

Over residues 1-15 (MNEQQRLASQQVNSS) the composition is skewed to polar residues. A disordered region spans residues 1-26 (MNEQQRLASQQVNSSTKKEEKDYSKY). Residues 16–25 (TKKEEKDYSK) are compositionally biased toward basic and acidic residues. The MTTase N-terminal domain maps to 66 to 184 (RKFYIRTYGC…LPYILKDAMF (119 aa)). [4Fe-4S] cluster is bound by residues Cys75, Cys111, Cys145, Cys221, Cys225, and Cys228. Positions 207–437 (RRGDIKAWVN…NALVNKLAIE (231 aa)) constitute a Radical SAM core domain. The TRAM domain maps to 440 to 503 (DRYKGQIVEV…TWSLNGELVE (64 aa)).

This sequence belongs to the methylthiotransferase family. MiaB subfamily. In terms of assembly, monomer. [4Fe-4S] cluster is required as a cofactor.

Its subcellular location is the cytoplasm. The catalysed reaction is N(6)-dimethylallyladenosine(37) in tRNA + (sulfur carrier)-SH + AH2 + 2 S-adenosyl-L-methionine = 2-methylsulfanyl-N(6)-dimethylallyladenosine(37) in tRNA + (sulfur carrier)-H + 5'-deoxyadenosine + L-methionine + A + S-adenosyl-L-homocysteine + 2 H(+). Functionally, catalyzes the methylthiolation of N6-(dimethylallyl)adenosine (i(6)A), leading to the formation of 2-methylthio-N6-(dimethylallyl)adenosine (ms(2)i(6)A) at position 37 in tRNAs that read codons beginning with uridine. The chain is tRNA-2-methylthio-N(6)-dimethylallyladenosine synthase from Bacillus thuringiensis (strain Al Hakam).